The chain runs to 123 residues: uncharacterized protein (123 aa).

The segment at methionine 1–glycine 28 is disordered. Basic and acidic residues predominate over residues lysine 7–threonine 20.

This sequence belongs to the TUSC2 family.

This is an uncharacterized protein from Caenorhabditis elegans.